A 231-amino-acid chain; its full sequence is Uracil-DNA glycosylase (231 aa).

Aspartate 70 functions as the Proton acceptor in the catalytic mechanism.

It belongs to the uracil-DNA glycosylase (UDG) superfamily. UNG family.

The protein resides in the cytoplasm. The catalysed reaction is Hydrolyzes single-stranded DNA or mismatched double-stranded DNA and polynucleotides, releasing free uracil.. In terms of biological role, excises uracil residues from the DNA which can arise as a result of misincorporation of dUMP residues by DNA polymerase or due to deamination of cytosine. In Campylobacter curvus (strain 525.92), this protein is Uracil-DNA glycosylase.